Consider the following 205-residue polypeptide: MKLDVIKLDGAKAGSVDLDEALFGLEPRADILHRVVRWQRNNAQAGTHKVKTRSEVNYSTKKIYRQKGTGGARHGARSAPIFRGGGVYKGPKVRSHGHELTKKFRKLGLCHALSAKMKAGELVIIDEVSSDGKTAALAKQVANLGWKRALIIDGATVNETFAQAARNIDGLDILPTMGANVYDILKRDTLVITKAGVEALEARLK.

It belongs to the universal ribosomal protein uL4 family. In terms of assembly, part of the 50S ribosomal subunit.

In terms of biological role, one of the primary rRNA binding proteins, this protein initially binds near the 5'-end of the 23S rRNA. It is important during the early stages of 50S assembly. It makes multiple contacts with different domains of the 23S rRNA in the assembled 50S subunit and ribosome. Its function is as follows. Forms part of the polypeptide exit tunnel. The chain is Large ribosomal subunit protein uL4 from Roseobacter denitrificans (strain ATCC 33942 / OCh 114) (Erythrobacter sp. (strain OCh 114)).